A 1486-amino-acid chain; its full sequence is Chromosome partition protein MukB (1486 aa).

Position 34-41 (G34–S41) interacts with ATP. 3 coiled-coil regions span residues L326–Q418, L444–Q480, and R509–V603. Residues P666–R783 form a flexible hinge region. Coiled-coil stretches lie at residues E835–E923, E977–A1115, and V1209–S1266.

The protein belongs to the SMC family. MukB subfamily. As to quaternary structure, homodimerization via its hinge domain. Binds to DNA via its C-terminal region. Interacts, and probably forms a ternary complex, with MukE and MukF via its C-terminal region. The complex formation is stimulated by calcium or magnesium. Interacts with tubulin-related protein FtsZ.

It is found in the cytoplasm. It localises to the nucleoid. Its function is as follows. Plays a central role in chromosome condensation, segregation and cell cycle progression. Functions as a homodimer, which is essential for chromosome partition. Involved in negative DNA supercoiling in vivo, and by this means organize and compact chromosomes. May achieve or facilitate chromosome segregation by condensation DNA from both sides of a centrally located replisome during cell division. The sequence is that of Chromosome partition protein MukB from Escherichia coli (strain ATCC 8739 / DSM 1576 / NBRC 3972 / NCIMB 8545 / WDCM 00012 / Crooks).